The primary structure comprises 1115 residues: Disheveled-associated activator of morphogenesis 2 (1115 aa).

Residues 40 to 416 (GPIPNPEELN…QIVLQDERGV (377 aa)) form the GBD/FH3 domain. Positions 434-515 (MLINENEVKQ…ELVARHNESS (82 aa)) form a coiled coil. 2 disordered regions span residues 510 to 605 (RHNE…SHPL) and 655 to 697 (QEGP…SATG). In terms of domain architecture, FH1 spans 518–694 (PVSSPPPPGG…TEKASRSMVS (177 aa)). The segment covering 540 to 583 (LPPPPPPLPFDSCPPPPAPPLPPGGPPIPPGAPPCFSSGPPPSH) has biased composition (pro residues). The 448-residue stretch at 595–1042 (KKRIPQPSHP…DERRARMEFM (448 aa)) folds into the FH2 domain. The DAD domain occupies 1065–1095 (EESGEFDDLVSALRSGEVFDKDLSKFKRNRK).

Belongs to the formin homology family. As to quaternary structure, interacts with DVL3. Interacts with INF2. In terms of tissue distribution, in early embryogenesis, expression is confined to embryonic ectoderm. Highly dynamic expression in later stages of gastrulation. In early somite stages, detected in posterior node and persists until 9-10 somites have developed when expression is concentrated in the chordoneural hinge. During organogenesis, expressed in the CNS, PNS, liver primordia, limb buds and genital tubercle.

In terms of biological role, key regulator of the Wnt signaling pathway, which is required for various processes during development, such as dorsal patterning, determination of left/right symmetry or myelination in the central nervous system. Acts downstream of Wnt ligands and upstream of beta-catenin (CTNNB1). Required for canonical Wnt signaling pathway during patterning in the dorsal spinal cord by promoting the aggregation of Disheveled (Dvl) complexes, thereby clustering and formation of Wnt receptor signalosomes and potentiating Wnt activity. During dorsal patterning of the spinal cord, inhibits oligodendrocytes differentiation via interaction with PIP5K1A. Also regulates non-canonical Wnt signaling pathway. Acts downstream of PITX2 in the developing gut and is required for left/right asymmetry within dorsal mesentery: affects mesenchymal condensation by lengthening cadherin-based junctions through WNT5A and non-canonical Wnt signaling, inducing polarized condensation in the left dorsal mesentery necessary to initiate gut rotation. Together with DAAM1, required for myocardial maturation and sarcomere assembly. Is a regulator of actin nucleation and elongation, filopodia formation and podocyte migration. This is Disheveled-associated activator of morphogenesis 2 from Mus musculus (Mouse).